The following is a 142-amino-acid chain: Hemoglobin subunit alpha (142 aa).

The region spanning 2 to 142 is the Globin domain; sequence VLSPADKSNV…VSTVLTSKYR (141 aa). Residue Ser4 is modified to Phosphoserine. Residues Lys8 and Lys12 each carry the N6-succinyllysine modification. At Lys17 the chain carries N6-acetyllysine; alternate. Lys17 carries the post-translational modification N6-succinyllysine; alternate. Tyr25 is modified (phosphotyrosine). At Ser36 the chain carries Phosphoserine. Lys41 is subject to N6-succinyllysine. At Ser50 the chain carries Phosphoserine. His59 is an O2 binding site. Residue His88 coordinates heme b. Position 103 is a phosphoserine (Ser103). Thr109 is modified (phosphothreonine). Position 125 is a phosphoserine (Ser125). Phosphothreonine occurs at positions 135 and 138. Position 139 is a phosphoserine (Ser139).

The protein belongs to the globin family. In terms of assembly, heterotetramer of two alpha chains and two beta chains. In terms of tissue distribution, red blood cells.

Functionally, involved in oxygen transport from the lung to the various peripheral tissues. Hemopressin acts as an antagonist peptide of the cannabinoid receptor CNR1. Hemopressin-binding efficiently blocks cannabinoid receptor CNR1 and subsequent signaling. The protein is Hemoglobin subunit alpha (HBA) of Ursus maritimus (Polar bear).